A 118-amino-acid polypeptide reads, in one-letter code: Large ribosomal subunit protein uL18 (118 aa).

Belongs to the universal ribosomal protein uL18 family. Part of the 50S ribosomal subunit; part of the 5S rRNA/L5/L18/L25 subcomplex. Contacts the 5S and 23S rRNAs.

This is one of the proteins that bind and probably mediate the attachment of the 5S RNA into the large ribosomal subunit, where it forms part of the central protuberance. The polypeptide is Large ribosomal subunit protein uL18 (Helicobacter pylori (strain P12)).